We begin with the raw amino-acid sequence, 47 residues long: PhoP/PhoQ regulator MgrB (47 aa).

A helical transmembrane segment spans residues 6 to 26; it reads WVVLGIVVVVCLLLWAQVFNI.

It belongs to the MgrB family. As to quaternary structure, may form homooligomers. Probably interacts with the periplasmic domain of PhoQ.

The protein resides in the cell inner membrane. Its function is as follows. PhoP-regulated transcription is redox-sensitive, being activated when the periplasm becomes more reducing. MgrB acts between DsbA/DsbB and PhoP/PhoQ in this pathway. Represses PhoP/PhoQ signaling, possibly by binding to the periplasmic domain of PhoQ, altering its activity and that of downstream effector PhoP. In Salmonella agona (strain SL483), this protein is PhoP/PhoQ regulator MgrB.